We begin with the raw amino-acid sequence, 909 residues long: Probable dipeptidyl-aminopeptidase B (909 aa).

The segment at 1–63 (MRVGSRINDE…HNHNGRAQGN (63 aa)) is disordered. Over 1–94 (MRVGSRINDE…NGKSNQRRTL (94 aa)) the chain is Cytoplasmic. The segment covering 27 to 38 (DSSSTASISLTL) has biased composition (low complexity). The helical; Signal-anchor for type II membrane protein transmembrane segment at 95–115 (IVFWLLVALCVGGWAVAFLFF) threads the bilayer. At 116 to 909 (VTSPGNKTST…YSNFLPIRSF (794 aa)) the chain is on the vacuolar side. A glycan (N-linked (GlcNAc...) asparagine) is linked at Asn121. The segment covering 123-134 (TSTSPHSGSNSP) has biased composition (polar residues). A disordered region spans residues 123–144 (TSTSPHSGSNSPEGDVTKPGIP). N-linked (GlcNAc...) asparagine glycans are attached at residues Asn207, Asn303, and Asn355. Catalysis depends on Ser760, which acts as the Charge relay system. N-linked (GlcNAc...) asparagine glycans are attached at residues Asn814, Asn819, and Asn822. Residues Asp837 and His870 each act as charge relay system in the active site. Asn888 is a glycosylation site (N-linked (GlcNAc...) asparagine).

This sequence belongs to the peptidase S9B family.

Its subcellular location is the vacuole membrane. The enzyme catalyses Release of an N-terminal dipeptide, Xaa-Yaa-|-Zaa-, from a polypeptide, preferentially when Yaa is Pro, provided Zaa is neither Pro nor hydroxyproline.. Its function is as follows. Type IV dipeptidyl-peptidase which removes N-terminal dipeptides sequentially from polypeptides having unsubstituted N-termini provided that the penultimate residue is proline. The sequence is that of Probable dipeptidyl-aminopeptidase B (DAPB) from Arthroderma benhamiae (strain ATCC MYA-4681 / CBS 112371) (Trichophyton mentagrophytes).